A 278-amino-acid chain; its full sequence is Elongation factor Ts (278 aa).

Positions 80-83 (TDFV) are involved in Mg(2+) ion dislocation from EF-Tu.

It belongs to the EF-Ts family.

It localises to the cytoplasm. Its function is as follows. Associates with the EF-Tu.GDP complex and induces the exchange of GDP to GTP. It remains bound to the aminoacyl-tRNA.EF-Tu.GTP complex up to the GTP hydrolysis stage on the ribosome. The polypeptide is Elongation factor Ts (Arthrobacter sp. (strain FB24)).